A 305-amino-acid polypeptide reads, in one-letter code: NADH-cytochrome b5 reductase 1 (305 aa).

The chain crosses the membrane as a helical span at residues 8 to 28 (VLLASLGVGLVTLLGLAVGSY). The 113-residue stretch at 44-156 (NEKYLLRLLD…RGPSGLLTYT (113 aa)) folds into the FAD-binding FR-type domain. FAD contacts are provided by residues 136-166 (DSLK…IQPN) and 175-210 (VAKK…QCFL).

This sequence belongs to the flavoprotein pyridine nucleotide cytochrome reductase family. FAD serves as cofactor. Widely expressed.

Its subcellular location is the membrane. It catalyses the reaction 2 Fe(III)-[cytochrome b5] + NADH = 2 Fe(II)-[cytochrome b5] + NAD(+) + H(+). Its function is as follows. NADH-cytochrome b5 reductases are involved in desaturation and elongation of fatty acids, cholesterol biosynthesis, drug metabolism, and, in erythrocyte, methemoglobin reduction. This Homo sapiens (Human) protein is NADH-cytochrome b5 reductase 1 (CYB5R1).